A 317-amino-acid polypeptide reads, in one-letter code: Ribosomal protein L11 methyltransferase (317 aa).

Residues threonine 158, glycine 179, aspartate 201, and asparagine 244 each coordinate S-adenosyl-L-methionine.

This sequence belongs to the methyltransferase superfamily. PrmA family.

The protein localises to the cytoplasm. The enzyme catalyses L-lysyl-[protein] + 3 S-adenosyl-L-methionine = N(6),N(6),N(6)-trimethyl-L-lysyl-[protein] + 3 S-adenosyl-L-homocysteine + 3 H(+). Methylates ribosomal protein L11. This chain is Ribosomal protein L11 methyltransferase, found in Streptococcus pyogenes serotype M28 (strain MGAS6180).